We begin with the raw amino-acid sequence, 370 residues long: Queuine tRNA-ribosyltransferase (370 aa).

Aspartate 89 (proton acceptor) is an active-site residue. Substrate-binding positions include 89–93 (DSGGF), aspartate 143, glutamine 185, and glycine 212. Residues 243 to 249 (GVGTPED) form an RNA binding region. Aspartate 262 serves as the catalytic Nucleophile. The RNA binding; important for wobble base 34 recognition stretch occupies residues 267–271 (TRNAR). Cysteine 300, cysteine 302, cysteine 305, and histidine 331 together coordinate Zn(2+).

Belongs to the queuine tRNA-ribosyltransferase family. Homodimer. Within each dimer, one monomer is responsible for RNA recognition and catalysis, while the other monomer binds to the replacement base PreQ1. Zn(2+) is required as a cofactor.

It carries out the reaction 7-aminomethyl-7-carbaguanine + guanosine(34) in tRNA = 7-aminomethyl-7-carbaguanosine(34) in tRNA + guanine. Its pathway is tRNA modification; tRNA-queuosine biosynthesis. Its function is as follows. Catalyzes the base-exchange of a guanine (G) residue with the queuine precursor 7-aminomethyl-7-deazaguanine (PreQ1) at position 34 (anticodon wobble position) in tRNAs with GU(N) anticodons (tRNA-Asp, -Asn, -His and -Tyr). Catalysis occurs through a double-displacement mechanism. The nucleophile active site attacks the C1' of nucleotide 34 to detach the guanine base from the RNA, forming a covalent enzyme-RNA intermediate. The proton acceptor active site deprotonates the incoming PreQ1, allowing a nucleophilic attack on the C1' of the ribose to form the product. After dissociation, two additional enzymatic reactions on the tRNA convert PreQ1 to queuine (Q), resulting in the hypermodified nucleoside queuosine (7-(((4,5-cis-dihydroxy-2-cyclopenten-1-yl)amino)methyl)-7-deazaguanosine). In Methylobacillus flagellatus (strain ATCC 51484 / DSM 6875 / VKM B-1610 / KT), this protein is Queuine tRNA-ribosyltransferase.